The following is a 61-amino-acid chain: Large ribosomal subunit protein uL30 (61 aa).

This sequence belongs to the universal ribosomal protein uL30 family. In terms of assembly, part of the 50S ribosomal subunit.

In Bordetella petrii (strain ATCC BAA-461 / DSM 12804 / CCUG 43448), this protein is Large ribosomal subunit protein uL30.